Reading from the N-terminus, the 417-residue chain is Caveolae-associated protein 2 (417 aa).

Residues 1-42 (MGEDAAQAEKFQHPNTDMLQEKPSNPSPMPSSTPSPSLNLGS) are disordered. G2 carries the post-translational modification N-acetylglycine. Positions 2 to 168 (GEDAAQAEKF…IFQEESEIPA (167 aa)) are interaction with CAVIN1. Phosphoserine occurs at positions 27, 35, 37, and 51. 2 coiled-coil regions span residues 61 to 87 (LLDK…INLE) and 126 to 267 (RAVR…VERR). The interval 62–100 (LDKLVNMLDAVRENQHNMEQRQINLEGSVKGIQNDLTKL) is leucine-zipper. T195 carries the post-translational modification Phosphothreonine. Disordered regions lie at residues 198–242 (NVDL…DSLK) and 256–381 (KLGT…ALQQ). Residues S202, S203, and S217 each carry the phosphoserine modification. Positions 202 to 218 (SSDDELPGDEEALEDSA) are enriched in acidic residues. Residues 219 to 242 (EEKMEESRAEKIKRSSLKKVDSLK) are compositionally biased toward basic and acidic residues. Over residues 274–286 (LTPNHQKASSGKS) the composition is skewed to polar residues. 6 positions are modified to phosphoserine: S282, S283, S286, S287, S292, and S295. Basic and acidic residues predominate over residues 302-320 (REGESSAENETKLEEQVQD). 4 positions are modified to phosphoserine: S326, S335, S358, and S362. Residues 354-365 (RGNNSGVGSNAD) are compositionally biased toward polar residues. A Phosphothreonine modification is found at T367. Over residues 367-376 (TIEEDEEEES) the composition is skewed to acidic residues. Y387 bears the Phosphotyrosine mark. A phosphoserine mark is found at S389 and S395.

It belongs to the CAVIN family. Component of the CAVIN complex composed of CAVIN1, CAVIN2, CAVIN3 and CAVIN. Interacts with CAVIN4; this augments the transactivation of NPPA by CAVIN4. Binds to PRKCA in the presence of phosphatidylserine. Interacts with CAVIN1 and CAV3. Post-translationally, the N-terminus is blocked. In terms of processing, phosphorylated on Ser residues.

Its subcellular location is the cytoplasm. It localises to the cytosol. The protein localises to the membrane. The protein resides in the caveola. Plays an important role in caveolar biogenesis and morphology. Regulates caveolae morphology by inducing membrane curvature within caveolae. Plays a role in caveola formation in a tissue-specific manner. Required for the formation of caveolae in the lung and fat endothelia but not in the heart endothelia. Negatively regulates the size or stability of CAVIN complexes in the lung endothelial cells. May play a role in targeting PRKCA to caveolae. This Rattus norvegicus (Rat) protein is Caveolae-associated protein 2.